Here is a 552-residue protein sequence, read N- to C-terminus: MDRKVAREFRHKVDFLIENDAEKDYLYDVLRMYHQTMDVAVLVGDLKLVINEPSRLPLFDAIRPLIPLKHQVEYDQLTPRRSRKLKEVRLDRLHPEGLGLSVRGGLEFGCGLFISHLIKGGQADSVGLQVGDEIVRINGYSISSCTHEEVINLIRTKKTVSIKVRHIGLIPVKSSPDEPLTWQYVDQFVSESGGVRGSLGSPGNRENKEKKVFISLVGSRGLGCSISSGPIQKPGIFISHVKPGSLSAEVGLEIGDQIVEVNGVDFSNLDHKEAVNVLKSSRSLTISIVAAAGRELFMTDRERLAEARQRELQRQELLMQKRLAMESNKILQEQQEMERQRRKEIAQKAAEENERYRKEMEQIVEEEEKFKKQWEEDWGSKEQLLLPKTITAEVHPVPLRKPKYDQGVEPELEPADDLDGGTEEQGEQDFRKYEEGFDPYSMFTPEQIMGKDVRLLRIKKEGSLDLALEGGVDSPIGKVVVSAVYERGAAERHGGIVKGDEIMAINGKIVTDYTLAEAEAALQKAWNQGGDWIDLVVAVCPPKEYDDELTFF.

Residues 1–86 (MDRKVAREFR…LTPRRSRKLK (86 aa)) form an N-terminal domain region. PDZ domains lie at 87-169 (EVRL…HIGL) and 211-293 (KVFI…AAAG). The interval 194–552 (GVRGSLGSPG…KEYDDELTFF (359 aa)) is mediates interaction with MYO7B. The residue at position 219 (Ser-219) is a Phosphoserine. A coiled-coil region spans residues 310–377 (RELQRQELLM…EKFKKQWEED (68 aa)). The disordered stretch occupies residues 401 to 427 (KPKYDQGVEPELEPADDLDGGTEEQGE). The segment covering 408 to 427 (VEPELEPADDLDGGTEEQGE) has biased composition (acidic residues). The 86-residue stretch at 452–537 (DVRLLRIKKE…QGGDWIDLVV (86 aa)) folds into the PDZ 3 domain.

In terms of assembly, part of the IMAC/intermicrovillar adhesion complex/intermicrovillar tip-link complex composed of ANKS4B, MYO7B, USH1C, CDHR2 and CDHR5. Part of a complex composed of USH1C, USH1G and MYO7A. Interacts with F-actin. Interacts with USH2A. Interacts with SLC4A7. Interacts (via PDZ1 domain) with the C-terminus of USHBP1. Interacts (via N-terminus and PDZ 2 domain) with CDH23. Interacts with USH1G. Interacts with MYO7B. Interacts with CDHR2 and CDHR5; may mediate their interaction with MYO7B at the microvilli tip. Interacts (via PDZ 1 domain) with ANKS4B. Interacts (via PDZ 1 domain) with DOCK4. In terms of tissue distribution, expressed in small intestine, colon, kidney, eye and weakly in pancreas. Expressed also in vestibule of the inner ear.

The protein localises to the cytoplasm. It localises to the cytosol. The protein resides in the cytoskeleton. It is found in the cell projection. Its subcellular location is the microvillus. Its function is as follows. Anchoring/scaffolding protein that is a part of the functional network formed by USH1C, USH1G, CDH23 and MYO7A that mediates mechanotransduction in cochlear hair cells. Required for normal development and maintenance of cochlear hair cell bundles. As part of the intermicrovillar adhesion complex/IMAC plays a role in brush border differentiation, controlling microvilli organization and length. Probably plays a central regulatory role in the assembly of the complex, recruiting CDHR2, CDHR5 and MYO7B to the microvilli tips. The chain is Harmonin (USH1C) from Homo sapiens (Human).